A 105-amino-acid polypeptide reads, in one-letter code: Sec-independent protein translocase protein TatA (105 aa).

Residues 1–21 (MSLGPWEIGIIVLLIIVLFGA) form a helical membrane-spanning segment. A compositionally biased stretch (basic and acidic residues) spans 41–50 (EVKEMNKDGD). Positions 41–105 (EVKEMNKDGD…QNYEDPNRTS (65 aa)) are disordered. The segment covering 52 to 92 (PEQQQQPQQQIAPNQIEAPQPNFEQHYQGQQVQQPQNPQTP) has biased composition (low complexity). Over residues 96-105 (QNYEDPNRTS) the composition is skewed to basic and acidic residues.

The protein belongs to the TatA/E family. The Tat system comprises two distinct complexes: a TatABC complex, containing multiple copies of TatA, TatB and TatC subunits, and a separate TatA complex, containing only TatA subunits. Substrates initially bind to the TatABC complex, which probably triggers association of the separate TatA complex to form the active translocon.

The protein resides in the cell membrane. Its function is as follows. Part of the twin-arginine translocation (Tat) system that transports large folded proteins containing a characteristic twin-arginine motif in their signal peptide across membranes. TatA could form the protein-conducting channel of the Tat system. The polypeptide is Sec-independent protein translocase protein TatA (Corynebacterium glutamicum (strain ATCC 13032 / DSM 20300 / JCM 1318 / BCRC 11384 / CCUG 27702 / LMG 3730 / NBRC 12168 / NCIMB 10025 / NRRL B-2784 / 534)).